The following is a 1001-amino-acid chain: UPF0182 protein Mjls_1469 (1001 aa).

The next 7 helical transmembrane spans lie at 16–36, 61–81, 112–132, 174–194, 209–229, 258–278, and 286–306; these read VLIG…RFID, VVVF…GLAL, LFGF…AQSY, FVAT…FGGI, IQLV…YWLD, KLIL…AIVL, and IGVV…PLVV. A compositionally biased stretch (low complexity) spans 900–929; the sequence is ATGPAPANLPDGQPAAQPPNGQQPAAQTPG. Residues 900 to 977 form a disordered region; sequence ATGPAPANLP…MSGLQDAQRS (78 aa).

The protein belongs to the UPF0182 family.

It localises to the cell membrane. The sequence is that of UPF0182 protein Mjls_1469 from Mycobacterium sp. (strain JLS).